The primary structure comprises 280 residues: Phosphonoacetaldehyde hydrolase (280 aa).

The active-site Nucleophile is Asp23. Residues Asp23 and Ala25 each coordinate Mg(2+). Lys64 functions as the Schiff-base intermediate with substrate in the catalytic mechanism. Position 197 (Asp197) interacts with Mg(2+).

It belongs to the HAD-like hydrolase superfamily. PhnX family. Homodimer. Mg(2+) is required as a cofactor.

It carries out the reaction phosphonoacetaldehyde + H2O = acetaldehyde + phosphate + H(+). Its function is as follows. Involved in phosphonate degradation. In Bordetella avium (strain 197N), this protein is Phosphonoacetaldehyde hydrolase.